We begin with the raw amino-acid sequence, 370 residues long: Aminomethyltransferase (370 aa).

The protein belongs to the GcvT family. As to quaternary structure, the glycine cleavage system is composed of four proteins: P, T, L and H.

It carries out the reaction N(6)-[(R)-S(8)-aminomethyldihydrolipoyl]-L-lysyl-[protein] + (6S)-5,6,7,8-tetrahydrofolate = N(6)-[(R)-dihydrolipoyl]-L-lysyl-[protein] + (6R)-5,10-methylene-5,6,7,8-tetrahydrofolate + NH4(+). Functionally, the glycine cleavage system catalyzes the degradation of glycine. The chain is Aminomethyltransferase from Prochlorococcus marinus (strain MIT 9215).